The sequence spans 312 residues: Serine/threonine-protein phosphatase CPPED1 (312 aa).

Serine 2 bears the Phosphoserine mark. Residues 47 to 250 form a catalytic region; that stretch reads KAWSTGNCDA…AVFSGHYHRN (204 aa). Positions 90, 127, and 246 each coordinate a divalent metal cation. Serine 293 is modified (phosphoserine).

It belongs to the metallophosphoesterase superfamily. CPPED1 family. A divalent metal cation is required as a cofactor.

Its subcellular location is the cytoplasm. The enzyme catalyses O-phospho-L-seryl-[protein] + H2O = L-seryl-[protein] + phosphate. It carries out the reaction O-phospho-L-threonyl-[protein] + H2O = L-threonyl-[protein] + phosphate. Protein phosphatase that dephosphorylates AKT family kinase specifically at 'Ser-473', blocking cell cycle progression and promoting cell apoptosis. May play an inhibitory role in glucose uptake by adipocytes. In Mus musculus (Mouse), this protein is Serine/threonine-protein phosphatase CPPED1 (Cpped1).